Here is an 811-residue protein sequence, read N- to C-terminus: Myb-like DNA-binding protein BAS1 (811 aa).

Residues 34–110 (HRKNGRNSWS…DVRKRWTGSL (77 aa)) enclose the Myb-like domain. 2 consecutive HTH myb-type domains span residues 111-165 (DPNL…GPGS) and 166-218 (KGRL…TMVV). 2 DNA-binding regions (H-T-H motif) span residues 138–161 (WLSISMDIPGRTEDQCAKRYIEVL) and 191–214 (WRKISSEMEFRPSLTCRNRWRKII). A compositionally biased stretch (basic and acidic residues) spans 237–264 (DMTDGKLRQHPIADSDIRSDSTPNKEEQ). Disordered stretches follow at residues 237 to 320 (DMTD…SAPP), 348 to 379 (SQMNKQSPGGISDSPQTSLPPAFNPASLDEHM), 535 to 713 (ATSH…LRDE), and 782 to 811 (LHNEAKKTSEHDMTSGGSTDNGSVLPLNPS). The segment covering 265 to 275 (LQLSQQNNPSL) has biased composition (low complexity). Residues 282–298 (NVKENESSKLPRLKDND) are compositionally biased toward basic and acidic residues. Composition is skewed to polar residues over residues 348–366 (SQMNKQSPGGISDSPQTSL), 535–613 (ATSH…TSGS), and 653–664 (LNPSPNSVRSNG). The span at 782-794 (LHNEAKKTSEHDM) shows a compositional bias: basic and acidic residues.

In terms of assembly, monomer.

The protein resides in the nucleus. Functionally, activates HIS4 transcription only in combination with PHO2/BAS2. BAS1 is also involved in the regulation of the purine biosynthesis pathway. The sequence is that of Myb-like DNA-binding protein BAS1 (BAS1) from Saccharomyces cerevisiae (strain ATCC 204508 / S288c) (Baker's yeast).